We begin with the raw amino-acid sequence, 233 residues long: Large ribosomal subunit protein uL1 (233 aa).

Belongs to the universal ribosomal protein uL1 family. In terms of assembly, part of the 50S ribosomal subunit.

Binds directly to 23S rRNA. The L1 stalk is quite mobile in the ribosome, and is involved in E site tRNA release. Functionally, protein L1 is also a translational repressor protein, it controls the translation of the L11 operon by binding to its mRNA. This Zymomonas mobilis subsp. mobilis (strain ATCC 31821 / ZM4 / CP4) protein is Large ribosomal subunit protein uL1.